Here is a 584-residue protein sequence, read N- to C-terminus: Peroxynitrite isomerase THAP4 (584 aa).

The segment at 1-85 (MVICCAAANC…LKPTAVPSIF (85 aa)) adopts a THAP-type zinc-finger fold. The tract at residues 84 to 330 (IFHLAEKKRR…EAVQSEHSDA (247 aa)) is disordered. Over residues 89 to 104 (EKKRRAGGHGRPRRRD) the composition is skewed to basic residues. A compositionally biased stretch (low complexity) spans 122–138 (GKAAAGSPSSSSASPMA). Positions 158-178 (AARETAGQERGRQPLEGRAED) are enriched in basic and acidic residues. Over residues 190–208 (GEAGTGAEDAGEEGATPAD) the composition is skewed to low complexity. Residues 236-239 (LHSY) carry the HCFC1-binding motif (HBM) motif. Serine 240 is subject to Phosphoserine. Over residues 248 to 267 (ERPAVPREPVERKRLRRDAE) the composition is skewed to basic and acidic residues. The interval 422-584 (PPKMSPVVEP…LHVTYKKVTP (163 aa)) is nitrobindin. Residues threonine 451 and histidine 574 each contribute to the heme b site.

It in the C-terminal section; belongs to the nitrobindin family. Homodimer. Heme b is required as a cofactor.

It localises to the cytoplasm. The protein resides in the nucleus. It carries out the reaction peroxynitrite = nitrate. It participates in nitrogen metabolism. Its function is as follows. Heme-binding protein able to scavenge peroxynitrite and to protect free L-tyrosine against peroxynitrite-mediated nitration, by acting as a peroxynitrite isomerase that converts peroxynitrite to nitrate. Therefore, this protein likely plays a role in peroxynitrite sensing and in the detoxification of reactive nitrogen and oxygen species (RNS and ROS, respectively). Is able to bind nitric oxide (NO) in vitro, but may act as a sensor of peroxynitrite levels in vivo, possibly modulating the transcriptional activity residing in the N-terminal region. This is Peroxynitrite isomerase THAP4 from Bos taurus (Bovine).